The sequence spans 1017 residues: Ubiquitin-like modifier-activating enzyme 1 (1017 aa).

2 consecutive repeat copies span residues 26-163 (SHET…GQLF) and 419-571 (GKTL…QVVV). Positions 26–571 (SHETMKKITS…GTKGNTQVVV (546 aa)) are 2 approximate repeats. ATP is bound by residues A438, D464, R475, K488, and 536–537 (DN). The active-site Glycyl thioester intermediate is C592. Residues 765–781 (IQTSENEPAPSSNTQQA) are compositionally biased toward polar residues. A disordered region spans residues 765–788 (IQTSENEPAPSSNTQQAGGDAEDD).

This sequence belongs to the ubiquitin-activating E1 family. In terms of assembly, monomer.

The enzyme catalyses ATP + ubiquitin + [E1 ubiquitin-activating enzyme]-L-cysteine = AMP + diphosphate + S-ubiquitinyl-[E1 ubiquitin-activating enzyme]-L-cysteine.. The protein operates within protein modification; protein ubiquitination. Functionally, catalyzes the first step in ubiquitin conjugation to mark cellular proteins for degradation through the ubiquitin-proteasome system. Activates ubiquitin by first adenylating its C-terminal glycine residue with ATP, and thereafter linking this residue to the side chain of a cysteine residue in E1, yielding a ubiquitin-E1 thioester and free AMP. This Dictyostelium discoideum (Social amoeba) protein is Ubiquitin-like modifier-activating enzyme 1 (uba1).